The following is a 398-amino-acid chain: Abhydrolase domain-containing protein 2 (398 aa).

Topologically, residues Met1–Ala4 are cytoplasmic. Residues Phe5–Val22 traverse the membrane as a helical; Signal-anchor for type II membrane protein segment. At His23–Pro398 the chain is on the extracellular side. Residues Val113–Gly365 enclose the AB hydrolase-1 domain. Active-site charge relay system residues include Ser192, Asp328, and His359.

It belongs to the AB hydrolase superfamily. AB hydrolase 4 family.

It is found in the membrane. This Drosophila melanogaster (Fruit fly) protein is Abhydrolase domain-containing protein 2 (Hydr2).